The primary structure comprises 1165 residues: Sperm-associated antigen 5 (1165 aa).

The interval 1–23 is disordered; sequence MWRVKTLNLGLSPSPQKGKPAMS. Ser-12, Ser-14, Ser-66, Ser-161, Ser-321, Ser-333, and Ser-342 each carry phosphoserine. The tract at residues 431-457 is disordered; that stretch reads TVPHREARDSSTQTDSSPCGVTKTPKH. Positions 440–449 are enriched in polar residues; sequence SSTQTDSSPC. The tract at residues 453–821 is interaction with KNSTRN; that stretch reads KTPKHLQDSK…LRDTVDSLRA (369 aa). Positions 509–856 form a coiled coil; it reads RSKTLVSSCS…LLAEQLQSLT (348 aa). Residues 875–907 are disordered; the sequence is PSTGSAPAQEHPLSNDSSISEQTPTAAVDEVPE. The segment covering 876–897 has biased composition (polar residues); it reads STGSAPAQEHPLSNDSSISEQT. A coiled-coil region spans residues 937–1146; the sequence is DLEKSLAEMS…IQHVYETLLS (210 aa). Ser-946 is subject to Phosphoserine; by GSK3-beta.

Homodimer, with a globular head domain and a long stalk. Homooligomer; the globular head domains associate, resulting in aster-like structures. Binds to microtubules in the mitotic spindle. Interacts with DCLRE1B/Apollo. Part of an astrin (SPAG5)-kinastrin (SKAP) complex containing KNSTRN, SPAG5, PLK1, DYNLL1 and SGO2A. Interacts with KNSTRN. Interacts with RPTOR; this interaction competes with RPTOR binding to MTOR, resulting in decreased mTORC1 formation. Interacts with G3BP1. The complex formed with G3BP1 and RPTOR is increased by oxidative stress. Interacts with OSBPL8, PCM1 and CDK5RAP2. Interacts (via C-terminus) with NUMA1 (via C-terminus); this interaction promotes the recruitment of SPAG5 to the microtubules at spindle poles in a dynein-dynactin-dependent manner. Interacts with DYNLL1. Post-translationally, phosphorylated by AURKA. Detected in testis, but not in the other tissues tested.

The protein localises to the cytoplasm. It localises to the cytoskeleton. The protein resides in the spindle. Its subcellular location is the spindle pole. It is found in the chromosome. The protein localises to the centromere. It localises to the kinetochore. The protein resides in the midbody. Its subcellular location is the microtubule organizing center. It is found in the centrosome. The protein localises to the centriolar satellite. Essential component of the mitotic spindle required for normal chromosome segregation and progression into anaphase. Required for chromosome alignment, normal timing of sister chromatid segregation, and maintenance of spindle pole architecture. In complex with SKAP, promotes stable microtubule-kinetochore attachments. May contribute to the regulation of separase activity. May regulate AURKA localization to mitotic spindle, but not to centrosomes and CCNB1 localization to both mitotic spindle and centrosomes. Involved in centriole duplication. Required for CDK5RAP22, CEP152, WDR62 and CEP63 centrosomal localization and promotes the centrosomal localization of CDK2. In non-mitotic cells, upon stress induction, inhibits mammalian target of rapamycin complex 1 (mTORC1) association and recruits the mTORC1 component RPTOR to stress granules (SGs), thereby preventing mTORC1 hyperactivation-induced apoptosis. May enhance GSK3B-mediated phosphorylation of other substrates, such as MAPT/TAU. The polypeptide is Sperm-associated antigen 5 (Spag5) (Mus musculus (Mouse)).